The sequence spans 538 residues: Syncytin-2 (538 aa).

Residues M1–A15 form the signal peptide. The Extracellular segment spans residues L31 to K478. The CXXC motif lies at C43–C46. Intrachain disulfides connect C43-C46, C43-C439, and C431-C438. N-linked (GlcNAc...) asparagine glycosylation is found at N133, N146, N177, N220, N241, N247, N312, and N332. Residues F354–I374 are fusion peptide. The CKS-17 signature appears at L414 to I430. Residues C431–C439 carry the CX6CC motif. A glycan (N-linked (GlcNAc...) asparagine) is linked at N443. The helical transmembrane segment at W479–F499 threads the bilayer. Over G500–F538 the chain is Cytoplasmic.

Belongs to the gamma type-C retroviral envelope protein family. HERV class-I FRD env subfamily. In terms of assembly, the surface and transmembrane proteins form a heterodimer. They are attached by non-covalent interactions or by a labile interchain disulfide bond. Specific enzymatic cleavages in vivo yield the mature SU and TM proteins. Post-translationally, the CXXC motif is highly conserved across a broad range of retroviral envelope proteins. It is thought to participate in the formation of a labile disulfide bond possibly with the CX6CC motif present in the transmembrane protein.

The protein localises to the cell membrane. Its function is as follows. This endogenous retroviral envelope protein has retained its original fusogenic properties and participates in trophoblast fusion and the formation of a syncytium during placenta morphogenesis. The interaction with MFSD2A is apparently important for this process. Endogenous envelope proteins may have kept, lost or modified their original function during evolution and this one is unable to confer infectivity. This chain is Syncytin-2 (ERVFRD-1), found in Hylobates moloch (Silvery gibbon).